A 287-amino-acid chain; its full sequence is Small ribosomal subunit protein uS10m (287 aa).

A mitochondrion-targeting transit peptide spans 1–33 (MSLFSPHRILLRTGSAFQLATATRALLSTSSQL). Over residues 33-43 (LRNTKNAQSGL) the composition is skewed to polar residues. The tract at residues 33 to 84 (LRNTKNAQSGLAEQARAEEPVASSPSQTTRPEQKSLEEETTKQTQTHADSTV) is disordered. The span at 63 to 73 (PEQKSLEEETT) shows a compositional bias: basic and acidic residues. Residues 74 to 84 (KQTQTHADSTV) are compositionally biased toward polar residues.

It belongs to the universal ribosomal protein uS10 family. As to quaternary structure, part of the mitochondrial small ribosomal subunit.

It is found in the mitochondrion. Functionally, involved in mitochondrial genome encoded proteins translation. Involved in the binding of tRNA to the ribosomes. In Emericella nidulans (strain FGSC A4 / ATCC 38163 / CBS 112.46 / NRRL 194 / M139) (Aspergillus nidulans), this protein is Small ribosomal subunit protein uS10m (rsm10).